The sequence spans 127 residues: Putative adhesin P1-like protein MPN_203 (127 aa).

Residues 70 to 90 (TENFTQPQPQPQALKTTTPVF) are disordered.

Belongs to the adhesin P1 family.

This is Putative adhesin P1-like protein MPN_203 from Mycoplasma pneumoniae (strain ATCC 29342 / M129 / Subtype 1) (Mycoplasmoides pneumoniae).